The primary structure comprises 576 residues: Proline--tRNA ligase (576 aa).

Belongs to the class-II aminoacyl-tRNA synthetase family. ProS type 1 subfamily. In terms of assembly, homodimer.

The protein resides in the cytoplasm. The catalysed reaction is tRNA(Pro) + L-proline + ATP = L-prolyl-tRNA(Pro) + AMP + diphosphate. Functionally, catalyzes the attachment of proline to tRNA(Pro) in a two-step reaction: proline is first activated by ATP to form Pro-AMP and then transferred to the acceptor end of tRNA(Pro). As ProRS can inadvertently accommodate and process non-cognate amino acids such as alanine and cysteine, to avoid such errors it has two additional distinct editing activities against alanine. One activity is designated as 'pretransfer' editing and involves the tRNA(Pro)-independent hydrolysis of activated Ala-AMP. The other activity is designated 'posttransfer' editing and involves deacylation of mischarged Ala-tRNA(Pro). The misacylated Cys-tRNA(Pro) is not edited by ProRS. The chain is Proline--tRNA ligase from Helicobacter pylori (strain J99 / ATCC 700824) (Campylobacter pylori J99).